We begin with the raw amino-acid sequence, 211 residues long: Protein GrpE (211 aa).

Basic and acidic residues predominate over residues 1-10 (MTDDTKKPGP). Disordered regions lie at residues 1–37 (MTDDTKKPGPDADVAEEFVDPAQAGEEQAETAEPDPV) and 187–211 (AKGGPKAEPSASAEPGTSSLNEKDA). The span at 27–36 (EQAETAEPDP) shows a compositional bias: acidic residues. Over residues 201-211 (PGTSSLNEKDA) the composition is skewed to polar residues.

Belongs to the GrpE family. In terms of assembly, homodimer.

The protein localises to the cytoplasm. Its function is as follows. Participates actively in the response to hyperosmotic and heat shock by preventing the aggregation of stress-denatured proteins, in association with DnaK and GrpE. It is the nucleotide exchange factor for DnaK and may function as a thermosensor. Unfolded proteins bind initially to DnaJ; upon interaction with the DnaJ-bound protein, DnaK hydrolyzes its bound ATP, resulting in the formation of a stable complex. GrpE releases ADP from DnaK; ATP binding to DnaK triggers the release of the substrate protein, thus completing the reaction cycle. Several rounds of ATP-dependent interactions between DnaJ, DnaK and GrpE are required for fully efficient folding. The protein is Protein GrpE of Agrobacterium fabrum (strain C58 / ATCC 33970) (Agrobacterium tumefaciens (strain C58)).